The sequence spans 336 residues: Holliday junction branch migration complex subunit RuvB (336 aa).

The tract at residues 4 to 184 (ADRLISAGTT…FGIVQRLEFY (181 aa)) is large ATPase domain (RuvB-L). Residues I23, R24, G65, K68, T69, T70, 131–133 (EDY), R174, Y184, and R221 each bind ATP. Mg(2+) is bound at residue T69. Residues 185-255 (QVPDLQYIVS…IAAQALDMLN (71 aa)) form a small ATPAse domain (RuvB-S) region. A head domain (RuvB-H) region spans residues 258-336 (AEGFDYMDRK…HFGITPPEMP (79 aa)). 3 residues coordinate DNA: R294, R313, and R318.

Belongs to the RuvB family. In terms of assembly, homohexamer. Forms an RuvA(8)-RuvB(12)-Holliday junction (HJ) complex. HJ DNA is sandwiched between 2 RuvA tetramers; dsDNA enters through RuvA and exits via RuvB. An RuvB hexamer assembles on each DNA strand where it exits the tetramer. Each RuvB hexamer is contacted by two RuvA subunits (via domain III) on 2 adjacent RuvB subunits; this complex drives branch migration. In the full resolvosome a probable DNA-RuvA(4)-RuvB(12)-RuvC(2) complex forms which resolves the HJ.

Its subcellular location is the cytoplasm. The catalysed reaction is ATP + H2O = ADP + phosphate + H(+). Its function is as follows. The RuvA-RuvB-RuvC complex processes Holliday junction (HJ) DNA during genetic recombination and DNA repair, while the RuvA-RuvB complex plays an important role in the rescue of blocked DNA replication forks via replication fork reversal (RFR). RuvA specifically binds to HJ cruciform DNA, conferring on it an open structure. The RuvB hexamer acts as an ATP-dependent pump, pulling dsDNA into and through the RuvAB complex. RuvB forms 2 homohexamers on either side of HJ DNA bound by 1 or 2 RuvA tetramers; 4 subunits per hexamer contact DNA at a time. Coordinated motions by a converter formed by DNA-disengaged RuvB subunits stimulates ATP hydrolysis and nucleotide exchange. Immobilization of the converter enables RuvB to convert the ATP-contained energy into a lever motion, pulling 2 nucleotides of DNA out of the RuvA tetramer per ATP hydrolyzed, thus driving DNA branch migration. The RuvB motors rotate together with the DNA substrate, which together with the progressing nucleotide cycle form the mechanistic basis for DNA recombination by continuous HJ branch migration. Branch migration allows RuvC to scan DNA until it finds its consensus sequence, where it cleaves and resolves cruciform DNA. This chain is Holliday junction branch migration complex subunit RuvB, found in Escherichia coli O17:K52:H18 (strain UMN026 / ExPEC).